We begin with the raw amino-acid sequence, 699 residues long: DNA topoisomerase 1 (699 aa).

Composition is skewed to basic and acidic residues over residues 1–15 (MAKS…KNEL) and 22–35 (IELK…ESKG). The segment at 1-37 (MAKSKVVEKDKKNELDNQSADIELKGQSKNEESKGGK) is disordered. In terms of domain architecture, Toprim spans 38-146 (KKVIIVESPA…NIITFTEITE (109 aa)). Positions 44 and 115 each coordinate Mg(2+). Positions 160-583 (DMNKVNAQLA…SFLKEFNKDL (424 aa)) constitute a Topo IA-type catalytic domain. Residues 194–199 (SAGRVQ) are interaction with DNA. Residue Y324 is the O-(5'-phospho-DNA)-tyrosine intermediate of the active site. A C4-type zinc finger spans residues 601–624 (CEDCSGNYKLKVGKYGLYLHCPNC). The tract at residues 649–699 (QESQEENGEKNSVQSEESSANSGNRKFYRKRRTSGSKKSSTKSASSKAKKK) is disordered. The segment covering 661-672 (VQSEESSANSGN) has biased composition (polar residues). Over residues 674-683 (KFYRKRRTSG) the composition is skewed to basic residues. Positions 684–699 (SKKSSTKSASSKAKKK) are enriched in low complexity.

This sequence belongs to the type IA topoisomerase family. Monomer. The cofactor is Mg(2+).

It carries out the reaction ATP-independent breakage of single-stranded DNA, followed by passage and rejoining.. Releases the supercoiling and torsional tension of DNA, which is introduced during the DNA replication and transcription, by transiently cleaving and rejoining one strand of the DNA duplex. Introduces a single-strand break via transesterification at a target site in duplex DNA. The scissile phosphodiester is attacked by the catalytic tyrosine of the enzyme, resulting in the formation of a DNA-(5'-phosphotyrosyl)-enzyme intermediate and the expulsion of a 3'-OH DNA strand. The free DNA strand then undergoes passage around the unbroken strand, thus removing DNA supercoils. Finally, in the religation step, the DNA 3'-OH attacks the covalent intermediate to expel the active-site tyrosine and restore the DNA phosphodiester backbone. The sequence is that of DNA topoisomerase 1 from Fervidobacterium islandicum.